Here is a 261-residue protein sequence, read N- to C-terminus: Hydroxyethylthiazole kinase (261 aa).

Methionine 39 contacts substrate. 2 residues coordinate ATP: arginine 115 and threonine 159. Substrate is bound at residue glycine 186.

The protein belongs to the Thz kinase family. Requires Mg(2+) as cofactor.

The enzyme catalyses 5-(2-hydroxyethyl)-4-methylthiazole + ATP = 4-methyl-5-(2-phosphooxyethyl)-thiazole + ADP + H(+). The protein operates within cofactor biosynthesis; thiamine diphosphate biosynthesis; 4-methyl-5-(2-phosphoethyl)-thiazole from 5-(2-hydroxyethyl)-4-methylthiazole: step 1/1. Its function is as follows. Catalyzes the phosphorylation of the hydroxyl group of 4-methyl-5-beta-hydroxyethylthiazole (THZ). This is Hydroxyethylthiazole kinase from Macrococcus caseolyticus (strain JCSC5402) (Macrococcoides caseolyticum).